We begin with the raw amino-acid sequence, 319 residues long: tRNA uridine(34) hydroxylase (319 aa).

The Rhodanese domain occupies 123–221; it reads GDPDVVVIDT…YLETIPPEQS (99 aa). Residue C181 is the Cysteine persulfide intermediate of the active site. The disordered stretch occupies residues 298–319; it reads ARQQVHIGASPEPKAMPATAGR.

It belongs to the TrhO family.

It carries out the reaction uridine(34) in tRNA + AH2 + O2 = 5-hydroxyuridine(34) in tRNA + A + H2O. Catalyzes oxygen-dependent 5-hydroxyuridine (ho5U) modification at position 34 in tRNAs. This is tRNA uridine(34) hydroxylase from Albidiferax ferrireducens (strain ATCC BAA-621 / DSM 15236 / T118) (Rhodoferax ferrireducens).